The sequence spans 472 residues: Inhibitor of Apoptosis OPG037 (472 aa).

ANK repeat units follow at residues 97 to 126, 130 to 161, 233 to 263, 267 to 297, 322 to 351, and 353 to 377; these read DGNYPLHIASKINNNRIVAMLLTHGADPNA, HNKTPLYYLSGTDDEVIERINLLVQYGAKINN, DGNTPLHIVCSKTVKNVDIIDLLLPSTDVNK, FGDSPLTLLIKTLSPAHLINKLLSTSNVITD, YDSTDFKMAVEVGSIRCVKYLLDNDIICED, and MYYAVLSEYETMVDYLLFNHFSVDF.

This sequence belongs to the orthopoxvirus OPG037 protein family. In terms of assembly, may interact with host caspase-9-Apaf-1 complex.

The protein resides in the host cytoplasm. Functionally, inhibits host apoptosis. Acts by associating with host apoptosome. The sequence is that of Inhibitor of Apoptosis OPG037 (OPG037) from Vaccinia virus (strain Western Reserve) (VACV).